A 317-amino-acid chain; its full sequence is Glycine--tRNA ligase alpha subunit (317 aa).

The protein belongs to the class-II aminoacyl-tRNA synthetase family. In terms of assembly, tetramer of two alpha and two beta subunits.

The protein resides in the cytoplasm. It catalyses the reaction tRNA(Gly) + glycine + ATP = glycyl-tRNA(Gly) + AMP + diphosphate. The chain is Glycine--tRNA ligase alpha subunit from Acidovorax ebreus (strain TPSY) (Diaphorobacter sp. (strain TPSY)).